The primary structure comprises 215 residues: Imidazole glycerol phosphate synthase subunit HisH (215 aa).

The Glutamine amidotransferase type-1 domain occupies 3 to 215; that stretch reads TAVVFDYGFG…QLLKNWIATL (213 aa). The Nucleophile role is filled by C81. Residues H196 and E198 contribute to the active site.

In terms of assembly, heterodimer of HisH and HisF.

It localises to the cytoplasm. It carries out the reaction 5-[(5-phospho-1-deoxy-D-ribulos-1-ylimino)methylamino]-1-(5-phospho-beta-D-ribosyl)imidazole-4-carboxamide + L-glutamine = D-erythro-1-(imidazol-4-yl)glycerol 3-phosphate + 5-amino-1-(5-phospho-beta-D-ribosyl)imidazole-4-carboxamide + L-glutamate + H(+). It catalyses the reaction L-glutamine + H2O = L-glutamate + NH4(+). It functions in the pathway amino-acid biosynthesis; L-histidine biosynthesis; L-histidine from 5-phospho-alpha-D-ribose 1-diphosphate: step 5/9. In terms of biological role, IGPS catalyzes the conversion of PRFAR and glutamine to IGP, AICAR and glutamate. The HisH subunit catalyzes the hydrolysis of glutamine to glutamate and ammonia as part of the synthesis of IGP and AICAR. The resulting ammonia molecule is channeled to the active site of HisF. This Bifidobacterium longum (strain NCC 2705) protein is Imidazole glycerol phosphate synthase subunit HisH.